The sequence spans 172 residues: Odorant-binding protein (172 aa).

An N-terminal signal peptide occupies residues 1–15; that stretch reads MVKFLLIVLALGVSC. Cystine bridges form between Cys60–Cys64 and Cys79–Cys170.

The protein belongs to the calycin superfamily. Lipocalin family. Homodimer.

The protein localises to the secreted. In terms of biological role, this protein is found in nasal epithelium and it binds a wide variety of chemical odorants. The chain is Odorant-binding protein (Obp1f) from Rattus norvegicus (Rat).